A 237-amino-acid chain; its full sequence is Beta-glucanase (237 aa).

A signal peptide spans 1 to 23; it reads MKKKSCFTLVTTFAFSLIFSVSA. Positions 28–237 constitute a GH16 domain; it reads VFWEPLSYFN…EYDWVKYTSN (210 aa). C55 and C84 are oxidised to a cystine. The active-site Nucleophile is the E128. The active-site Proton donor is E132.

The protein belongs to the glycosyl hydrolase 16 family.

It carries out the reaction Hydrolysis of (1-&gt;4)-beta-D-glucosidic linkages in beta-D-glucans containing (1-&gt;3)- and (1-&gt;4)-bonds.. The protein is Beta-glucanase of Paenibacillus macerans (Bacillus macerans).